A 408-amino-acid polypeptide reads, in one-letter code: Na(+)-translocating NADH-quinone reductase subunit F (408 aa).

A helical membrane pass occupies residues 4 to 24 (IYLGVGMFTIIVLVLVAIIMF). The 2Fe-2S ferredoxin-type domain occupies 33–127 (GDVEILINDD…DMEIELPEEV (95 aa)). [2Fe-2S] cluster-binding residues include C70, C76, C79, and C111. The FAD-binding FR-type domain occupies 130-270 (IRKWDCTVKS…SGPFGEFFAK (141 aa)).

The protein belongs to the NqrF family. In terms of assembly, composed of six subunits; NqrA, NqrB, NqrC, NqrD, NqrE and NqrF. [2Fe-2S] cluster serves as cofactor. The cofactor is FAD.

The protein resides in the cell inner membrane. The enzyme catalyses a ubiquinone + n Na(+)(in) + NADH + H(+) = a ubiquinol + n Na(+)(out) + NAD(+). Functionally, NQR complex catalyzes the reduction of ubiquinone-1 to ubiquinol by two successive reactions, coupled with the transport of Na(+) ions from the cytoplasm to the periplasm. The first step is catalyzed by NqrF, which accepts electrons from NADH and reduces ubiquinone-1 to ubisemiquinone by a one-electron transfer pathway. The protein is Na(+)-translocating NADH-quinone reductase subunit F of Idiomarina loihiensis (strain ATCC BAA-735 / DSM 15497 / L2-TR).